A 638-amino-acid polypeptide reads, in one-letter code: Ubiquilin-2 (638 aa).

The span at Met1–Pro26 shows a compositional bias: low complexity. Disordered stretches follow at residues Met1 to Lys31 and Arg107 to Gly158. The residue at position 2 (Ala2) is an N-acetylalanine. Ser25 is modified (phosphoserine). Residues Ile33 to Arg107 form the Ubiquitin-like domain. Positions Ala112 to Gly158 are enriched in low complexity. STI1 domains follow at residues Ser189–Met217 and Asn219–Met258. A disordered region spans residues Phe298–Ala364. Residues Thr305–Thr316 are compositionally biased toward low complexity. Residues Leu327 to Thr336 are compositionally biased toward pro residues. Positions Thr337–Ala364 are enriched in low complexity. STI1 domains follow at residues Asn393–Met440 and Leu444–Leu476. 11 consecutive repeat copies span residues Pro505–Gly507, Pro508–Thr510, Pro511–Gly513, Pro514–Gly516, Pro517–Val519, Pro520–Thr522, Pro523–Gly525, Pro526–Gly528, Pro529–Gly531, Pro532–Thr533, and Pro535–Ser537. The 11 X 3 AA tandem repeats P-X-X stretch occupies residues Pro505 to Ser537. The interval Gly528 to Asn570 is disordered. The span at Thr533–Thr551 shows a compositional bias: low complexity. A compositionally biased stretch (polar residues) spans Val552–Asn570. A UBA domain is found at Pro589–Ser635.

As to quaternary structure, homodimer. Forms heterodimer with UBQLN1. Binds UBE3A and BTRC. Interacts with the 19S proteasome subunit. Interacts with C9orf72. Binds CD47. Interacts with HNRNPA1 and HNRNPU. Found in a complex with UBQLN1 and MAP1LC3A/B/C. Interacts with EPS15, EPN1 and EPN2. Interacts with HERPUD1. Interacts with RAD23A. Interacts with TARDBP. Interacts (via C-terminus) with FAF2 (via N-terminus). Interacts with UBQLN4. Post-translationally, degraded during macroautophagy. As to expression, highly expressed in smooth muscle. Expression in other tissues is very low.

It is found in the cytoplasm. It localises to the nucleus. Its subcellular location is the membrane. The protein localises to the cytoplasmic vesicle. The protein resides in the autophagosome. Its function is as follows. Plays an important role in the regulation of different protein degradation mechanisms and pathways including ubiquitin-proteasome system (UPS), autophagy and the endoplasmic reticulum-associated protein degradation (ERAD) pathway. Mediates the proteasomal targeting of misfolded or accumulated proteins for degradation by binding (via UBA domain) to their polyubiquitin chains and by interacting (via ubiquitin-like domain) with the subunits of the proteasome. Plays a role in the ERAD pathway via its interaction with ER-localized proteins FAF2/UBXD8 and HERPUD1 and may form a link between the polyubiquitinated ERAD substrates and the proteasome. Involved in the regulation of macroautophagy and autophagosome formation; required for maturation of autophagy-related protein LC3 from the cytosolic form LC3-I to the membrane-bound form LC3-II and may assist in the maturation of autophagosomes to autolysosomes by mediating autophagosome-lysosome fusion. Negatively regulates the endocytosis of GPCR receptors: AVPR2 and ADRB2, by specifically reducing the rate at which receptor-arrestin complexes concentrate in clathrin-coated pits (CCPs). Links CD47 to vimentin-containing intermediate filaments of the cytoskeleton. This Mus musculus (Mouse) protein is Ubiquilin-2 (Ubqln2).